Reading from the N-terminus, the 132-residue chain is Large ribosomal subunit protein bL17 (132 aa).

Belongs to the bacterial ribosomal protein bL17 family. As to quaternary structure, part of the 50S ribosomal subunit. Contacts protein L32.

The polypeptide is Large ribosomal subunit protein bL17 (Anaplasma phagocytophilum (strain HZ)).